The primary structure comprises 102 residues: Large ribosomal subunit protein uL24 (102 aa).

This sequence belongs to the universal ribosomal protein uL24 family. As to quaternary structure, part of the 50S ribosomal subunit.

Functionally, one of two assembly initiator proteins, it binds directly to the 5'-end of the 23S rRNA, where it nucleates assembly of the 50S subunit. Its function is as follows. One of the proteins that surrounds the polypeptide exit tunnel on the outside of the subunit. The sequence is that of Large ribosomal subunit protein uL24 from Burkholderia ambifaria (strain ATCC BAA-244 / DSM 16087 / CCUG 44356 / LMG 19182 / AMMD) (Burkholderia cepacia (strain AMMD)).